The chain runs to 271 residues: Acyl-[acyl-carrier-protein]--UDP-N-acetylglucosamine O-acyltransferase (271 aa).

It belongs to the transferase hexapeptide repeat family. LpxA subfamily. As to quaternary structure, homotrimer.

It localises to the cytoplasm. The enzyme catalyses a (3R)-hydroxyacyl-[ACP] + UDP-N-acetyl-alpha-D-glucosamine = a UDP-3-O-[(3R)-3-hydroxyacyl]-N-acetyl-alpha-D-glucosamine + holo-[ACP]. It participates in glycolipid biosynthesis; lipid IV(A) biosynthesis; lipid IV(A) from (3R)-3-hydroxytetradecanoyl-[acyl-carrier-protein] and UDP-N-acetyl-alpha-D-glucosamine: step 1/6. In terms of biological role, involved in the biosynthesis of lipid A, a phosphorylated glycolipid that anchors the lipopolysaccharide to the outer membrane of the cell. The protein is Acyl-[acyl-carrier-protein]--UDP-N-acetylglucosamine O-acyltransferase of Sulfurihydrogenibium sp. (strain YO3AOP1).